We begin with the raw amino-acid sequence, 115 residues long: Ribonuclease P protein component (115 aa).

The protein belongs to the RnpA family. In terms of assembly, consists of a catalytic RNA component (M1 or rnpB) and a protein subunit.

It carries out the reaction Endonucleolytic cleavage of RNA, removing 5'-extranucleotides from tRNA precursor.. In terms of biological role, RNaseP catalyzes the removal of the 5'-leader sequence from pre-tRNA to produce the mature 5'-terminus. It can also cleave other RNA substrates such as 4.5S RNA. The protein component plays an auxiliary but essential role in vivo by binding to the 5'-leader sequence and broadening the substrate specificity of the ribozyme. In Blochmanniella pennsylvanica (strain BPEN), this protein is Ribonuclease P protein component.